Consider the following 294-residue polypeptide: uncharacterized protein (294 aa).

This is an uncharacterized protein from Bacillus subtilis (strain 168).